A 393-amino-acid chain; its full sequence is S-adenosylmethionine synthase 1 (393 aa).

Mg(2+) is bound at residue Glu9. ATP is bound at residue His15. Residue Glu43 coordinates K(+). L-methionine is bound by residues Glu56 and Gln99. Cys114 bears the S-nitrosocysteine mark. ATP contacts are provided by residues 167–169, 235–238, Asp246, 252–253, Ala269, Lys273, and Lys277; these read DGK, SGRF, and RK. Residue Asp246 participates in L-methionine binding. Lys277 contacts L-methionine.

This sequence belongs to the AdoMet synthase family. Homotetramer. Interacts with GRF3. Mn(2+) serves as cofactor. Requires Mg(2+) as cofactor. It depends on Co(2+) as a cofactor. The cofactor is K(+). In terms of processing, S-nitrosylated in the presence of NO. The inhibition of SAM1 activity by S-nitrosylation could contribute to the cross-talk between ethylene and NO signaling. In terms of tissue distribution, highly expressed in stems and roots.

The protein resides in the cytoplasm. The enzyme catalyses L-methionine + ATP + H2O = S-adenosyl-L-methionine + phosphate + diphosphate. It participates in amino-acid biosynthesis; S-adenosyl-L-methionine biosynthesis; S-adenosyl-L-methionine from L-methionine: step 1/1. Reversibly inhibited by NO. Inhibited by 5,5'-dithiobis-2-nitrobenzoic acid (DTNB) and N-ethylmaleimide (NEM) (in vitro). Functionally, catalyzes the formation of S-adenosylmethionine from methionine and ATP. The reaction comprises two steps that are both catalyzed by the same enzyme: formation of S-adenosylmethionine (AdoMet) and triphosphate, and subsequent hydrolysis of the triphosphate. This chain is S-adenosylmethionine synthase 1 (SAM1), found in Arabidopsis thaliana (Mouse-ear cress).